A 459-amino-acid chain; its full sequence is Ribulose bisphosphate carboxylase (459 aa).

Asn111 is a substrate binding site. Lys166 functions as the Proton acceptor in the catalytic mechanism. Residue Lys168 coordinates substrate. Residues Lys191, Asp193, and Glu194 each coordinate Mg(2+). Lys191 carries the N6-carboxylysine modification. The active-site Proton acceptor is His287. Arg288, His321, and Ser368 together coordinate substrate.

Belongs to the RuBisCO large chain family. Type II subfamily. As to quaternary structure, homodimer. Mg(2+) serves as cofactor.

It catalyses the reaction 2 (2R)-3-phosphoglycerate + 2 H(+) = D-ribulose 1,5-bisphosphate + CO2 + H2O. The enzyme catalyses D-ribulose 1,5-bisphosphate + O2 = 2-phosphoglycolate + (2R)-3-phosphoglycerate + 2 H(+). Functionally, ruBisCO catalyzes two reactions: the carboxylation of D-ribulose 1,5-bisphosphate, the primary event in carbon dioxide fixation, as well as the oxidative fragmentation of the pentose substrate. Both reactions occur simultaneously and in competition at the same active site. The chain is Ribulose bisphosphate carboxylase from Paramagnetospirillum magnetotacticum (Aquaspirillum magnetotacticum).